We begin with the raw amino-acid sequence, 119 residues long: uncharacterized protein (119 aa).

In terms of domain architecture, ABC transmembrane type-1 spans 1 to 112; sequence MVFNMRSTRG…FISSCLLLVL (112 aa). 2 consecutive transmembrane segments (helical) span residues 51–73 and 91–111; these read VLAWSRAIGEFGATLMLAGATRF and FEIAIGASLWLLFISSCLLLV.

The protein belongs to the binding-protein-dependent transport system permease family. CysTW subfamily.

It is found in the cell membrane. This is an uncharacterized protein from Haemophilus influenzae (strain ATCC 51907 / DSM 11121 / KW20 / Rd).